The sequence spans 66 residues: Ocellatin-PT5 (66 aa).

An N-terminal signal peptide occupies residues 1 to 22; sequence MAFLKKSLFLVLFLGLVSLSIC. Positions 23 to 39 are excised as a propeptide; that stretch reads DEEKRQDEDDDDDDDEE. Val66 carries the post-translational modification Valine amide.

Expressed by the skin glands.

It is found in the secreted. Its function is as follows. Has antibacterial activity against Gram-negative bacterium E.coli ATCC 25922 (MIC=300 uM) but not against S.pneumoniae ATCC 700603, S.choleraesuis ATCC 14028 or Gram-positive bacterium S.aureus ATCC 29313. Shows very little hemolytic activity and no cytotoxicity. This is Ocellatin-PT5 from Leptodactylus pustulatus (Ceara white-lipped frog).